Reading from the N-terminus, the 100-residue chain is Urease subunit gamma (100 aa).

The protein belongs to the urease gamma subunit family. Heterotrimer of UreA (gamma), UreB (beta) and UreC (alpha) subunits. Three heterotrimers associate to form the active enzyme.

It localises to the cytoplasm. It carries out the reaction urea + 2 H2O + H(+) = hydrogencarbonate + 2 NH4(+). Its pathway is nitrogen metabolism; urea degradation; CO(2) and NH(3) from urea (urease route): step 1/1. This Cupriavidus taiwanensis (strain DSM 17343 / BCRC 17206 / CCUG 44338 / CIP 107171 / LMG 19424 / R1) (Ralstonia taiwanensis (strain LMG 19424)) protein is Urease subunit gamma.